The primary structure comprises 245 residues: Cysteine-rich secretory protein 3 (245 aa).

Residues 1–20 (MTLFPVLLFLVAGLLPSFPA) form the signal peptide. Positions 43–171 (VNKHNELRRA…VLKYYYVCQY (129 aa)) constitute an SCP domain. Disulfide bonds link C191–C198, C194–C203, C207–C240, C216–C234, and C225–C238. Residues 207–240 (CKYEDLYSNCKSLKLTLTCKHQLVRDSCKASCNC) form the ShKT domain. A glycan (N-linked (GlcNAc...) asparagine) is linked at N239.

It belongs to the CRISP family. As to quaternary structure, interacts with A1BG. As to expression, salivary gland, pancreas and prostate &gt; epididymis, ovary, thymus and colon.

It localises to the secreted. This chain is Cysteine-rich secretory protein 3 (CRISP3), found in Homo sapiens (Human).